We begin with the raw amino-acid sequence, 1145 residues long: Protein sumv-2 (1145 aa).

Over residues 1 to 13 (MKPGRKSLPKKNR) the composition is skewed to basic residues. Disordered stretches follow at residues 1 to 310 (MKPG…APPA), 429 to 464 (QSRT…QKAR), 999 to 1025 (HSAS…AGSE), 1040 to 1059 (QIAA…PRTE), and 1073 to 1145 (ITTG…ISLI). Over residues 14–34 (ASNITEKMPTTSTEAQSSSSK) the composition is skewed to polar residues. Composition is skewed to basic and acidic residues over residues 73 to 104 (KTTE…EPRK) and 216 to 225 (VPEKKPKIED). The span at 226 to 248 (APTTSSPKKSTPTSAPPTRASAR) shows a compositional bias: low complexity. Positions 455–464 (GDEKRQQKAR) are enriched in basic and acidic residues. Low complexity predominate over residues 999–1013 (HSASSSAAPSPVGAS). Over residues 1091–1102 (VIERGDFRDHRP) the composition is skewed to basic and acidic residues. The span at 1121-1136 (QQPPLPSPAPPPPRGP) shows a compositional bias: pro residues.

Influences the activity of genes involved in vulval development. This Caenorhabditis elegans protein is Protein sumv-2.